Reading from the N-terminus, the 173-residue chain is uncharacterized protein (173 aa).

This is an uncharacterized protein from Rhodospirillum rubrum.